The chain runs to 89 residues: MSLDTTEKQQLINANQTHGTDTGSVEVQVAMLSERITKLSSHLQENKHDFSSRQGLLKMIGRRKRLLSYVRGKSEQRYNGLITKLGIRG.

The tract at residues 1–23 (MSLDTTEKQQLINANQTHGTDTG) is disordered. The segment covering 8–23 (KQQLINANQTHGTDTG) has biased composition (polar residues).

This sequence belongs to the universal ribosomal protein uS15 family. Part of the 30S ribosomal subunit. Forms a bridge to the 50S subunit in the 70S ribosome, contacting the 23S rRNA.

In terms of biological role, one of the primary rRNA binding proteins, it binds directly to 16S rRNA where it helps nucleate assembly of the platform of the 30S subunit by binding and bridging several RNA helices of the 16S rRNA. Its function is as follows. Forms an intersubunit bridge (bridge B4) with the 23S rRNA of the 50S subunit in the ribosome. This is Small ribosomal subunit protein uS15 from Prochlorococcus marinus (strain MIT 9313).